A 316-amino-acid polypeptide reads, in one-letter code: GTP cyclohydrolase FolE2 1 (316 aa).

It belongs to the GTP cyclohydrolase IV family.

It catalyses the reaction GTP + H2O = 7,8-dihydroneopterin 3'-triphosphate + formate + H(+). Its pathway is cofactor biosynthesis; 7,8-dihydroneopterin triphosphate biosynthesis; 7,8-dihydroneopterin triphosphate from GTP: step 1/1. In terms of biological role, converts GTP to 7,8-dihydroneopterin triphosphate. This chain is GTP cyclohydrolase FolE2 1, found in Burkholderia lata (strain ATCC 17760 / DSM 23089 / LMG 22485 / NCIMB 9086 / R18194 / 383).